A 206-amino-acid polypeptide reads, in one-letter code: Stage III sporulation protein AF (206 aa).

Transmembrane regions (helical) follow at residues 1–21 and 34–54; these read MSFL…AIVI and AKMV…FKLF.

It is found in the cell membrane. In Bacillus subtilis (strain 168), this protein is Stage III sporulation protein AF (spoIIIAF).